Reading from the N-terminus, the 463-residue chain is Fumarate hydratase class II (463 aa).

Residues 98-100, 129-132, 139-141, and threonine 187 each bind substrate; these read SGT, HPND, and SSN. Catalysis depends on histidine 188, which acts as the Proton donor/acceptor. The active site involves serine 318. Residues serine 319 and 324–326 contribute to the substrate site; that span reads KVN.

This sequence belongs to the class-II fumarase/aspartase family. Fumarase subfamily. As to quaternary structure, homotetramer.

The protein resides in the cytoplasm. It carries out the reaction (S)-malate = fumarate + H2O. It participates in carbohydrate metabolism; tricarboxylic acid cycle; (S)-malate from fumarate: step 1/1. In terms of biological role, involved in the TCA cycle. Catalyzes the stereospecific interconversion of fumarate to L-malate. In Caulobacter vibrioides (strain ATCC 19089 / CIP 103742 / CB 15) (Caulobacter crescentus), this protein is Fumarate hydratase class II.